The sequence spans 644 residues: Sodium/hydrogen exchanger 9 (644 aa).

The Lumenal portion of the chain corresponds to 1-20 (MAGQLRFTSGKDEDHFQHQG). The chain crosses the membrane as a helical span at residues 21 to 41 (AVELLAFNFLLILTILTIWLF). At 42 to 45 (KNHR) the chain is on the cytoplasmic side. The chain crosses the membrane as a helical span at residues 46–66 (FRFLHETGGAMVYGLIMGLIL). At 67–126 (RYATAPTDIDSGTVYNCGNLFFSPSTLLVNITDQVYEYKYQREINQHNISPHQGNAILEK) the chain is on the lumenal side. Residues 127–147 (MTFDPEIFFNVLLPPIIFHAG) form a helical membrane-spanning segment. Over 148–164 (YSLKKRHFFQNLGSILT) the chain is Cytoplasmic. Residues 165–185 (YAFLGTAISCVVIGLIMYGFV) traverse the membrane as a helical segment. Residues 186–203 (KAMVHAGQLKSGDFHFTD) are Lumenal-facing. Residues 204 to 224 (CLFFGSLMSATDPVTVLAIFH) form a helical membrane-spanning segment. Residues 225–235 (ELHVDPDLYTL) lie on the Cytoplasmic side of the membrane. The helical transmembrane segment at 236-256 (LFGESVLNDAVAIVLTYSISI) threads the bilayer. The Lumenal portion of the chain corresponds to 257 to 277 (YSPKENPNAFDTAAFFQSVGN). The helical transmembrane segment at 278–298 (FLGIFAGSFAMGSAYAVVTAL) threads the bilayer. Residues 299–309 (LTKFTKLREFP) lie on the Cytoplasmic side of the membrane. The helical transmembrane segment at 310–327 (MLETGLFFLLSWSAFLSA) threads the bilayer. Over 328-333 (EAAGLT) the chain is Lumenal. A helical membrane pass occupies residues 334-350 (GIVAVLFCGVTQAHYTY). Residues 351–364 (NNLSSDSKLRTKQL) lie on the Cytoplasmic side of the membrane. Residues 365 to 385 (FEFMNFLAENVIFCYMGLALF) traverse the membrane as a helical segment. A topological domain (lumenal) is located at residue T386. Residues 387–407 (FQNHIFNALFILGAFLAIFVA) form a helical membrane-spanning segment. Residues 408 to 429 (RACNIYPLSFLLNLGRKQKIPW) are Cytoplasmic-facing. Residues 430–450 (NFQHMMMFSGLRGAIAFALAI) traverse the membrane as a helical segment. Residues 451 to 465 (RNTESQPKQMMFTTT) lie on the Lumenal side of the membrane. A helical membrane pass occupies residues 466 to 486 (LLLVFFTVWVFGGGTTPMLTW). At 487 to 644 (LQIRVGVDLD…EQTRGQPQMD (158 aa)) the chain is on the cytoplasmic side. A disordered region spans residues 590–644 (YQEQSPSPSSPTTKLALDQKSSGQTPGKENIYEGDLGLGGYDLKLEQTRGQPQMD).

Belongs to the monovalent cation:proton antiporter 1 (CPA1) transporter (TC 2.A.36) family. In terms of assembly, homodimer; phosphatidylinositol-4,5-bisphosphate (PIP2) and phosphatidylinositol 3,4,5-trisphosphate (PIP3) could be involved in the dimer stabilization. Interacts (via the C-terminus) with RACK1. Interacts with CHP1. In terms of tissue distribution, expressed in the brain. Highly expressed in immune cells, specifically macrophages.

It localises to the late endosome membrane. The protein resides in the cell membrane. Its subcellular location is the early endosome membrane. It is found in the recycling endosome membrane. The protein localises to the cytoplasmic vesicle. It localises to the phagosome membrane. The enzyme catalyses Na(+)(in) + H(+)(out) = Na(+)(out) + H(+)(in). It carries out the reaction K(+)(in) + H(+)(out) = K(+)(out) + H(+)(in). Its function is as follows. Endosomal Na(+), K(+)/H(+) antiporter. Mediates the electroneutral exchange of endosomal luminal H(+) for a cytosolic Na(+) or K(+). By facilitating proton efflux, SLC9A9 counteracts the acidity generated by vacuolar (V)-ATPase, thereby limiting luminal acidification. Regulates organellar pH and consequently, endosome maturation and endocytic trafficking of plasma membrane receptors and neurotransporters. Promotes the recycling of transferrin receptors back to the cell surface to facilitate additional iron uptake in the brain. Regulates synaptic transmission by regulating the luminal pH of axonal endosomes. Regulates phagosome lumenal pH, thus affecting phagosome maturation, and consequently, microbicidal activity in macrophages. Can also be active at the cell surface of specialized cells, e.g., in the inner ear hair bundles uses the high K(+) of the endolymph to regulate intracelular pH. The sequence is that of Sodium/hydrogen exchanger 9 (Slc9a9) from Mus musculus (Mouse).